Reading from the N-terminus, the 209-residue chain is Kynurenine formamidase (209 aa).

Position 18 (Phe-18) interacts with substrate. Zn(2+) is bound by residues His-48, His-52, and Asp-54. His-58 (proton donor/acceptor) is an active-site residue. Residues His-160 and Glu-172 each coordinate Zn(2+).

This sequence belongs to the Cyclase 1 superfamily. KynB family. Homodimer. Zn(2+) is required as a cofactor.

The enzyme catalyses N-formyl-L-kynurenine + H2O = L-kynurenine + formate + H(+). Its pathway is amino-acid degradation; L-tryptophan degradation via kynurenine pathway; L-kynurenine from L-tryptophan: step 2/2. Its function is as follows. Catalyzes the hydrolysis of N-formyl-L-kynurenine to L-kynurenine, the second step in the kynurenine pathway of tryptophan degradation. The polypeptide is Kynurenine formamidase (Bordetella petrii (strain ATCC BAA-461 / DSM 12804 / CCUG 43448)).